The following is a 254-amino-acid chain: ATP synthase subunit a (254 aa).

The propeptide at 1 to 6 (MAFLIH) is removed in mature form. Transmembrane regions (helical) follow at residues 32-52 (LTNLGLYTILTVYLVLALHIM), 83-103 (IGAANEMYLPFIYSLFFFILI), 119-139 (SIMVSIGLSMTIFIGVTILGL), 146-166 (FFSFFVPSGTPLGLVPLLVPI), 182-202 (LFANVTAGHVLMKILAGFLAP), 207-227 (TFIISVLTVLPFIIFTGIIGL), and 228-248 (EIAVSFIQAYVFCVLTCSYLK).

This sequence belongs to the ATPase A chain family. In terms of assembly, F-type ATPases have 2 components, CF(1) - the catalytic core - and CF(0) - the membrane proton channel. CF(1) has five subunits: alpha(3), beta(3), gamma(1), delta(1), epsilon(1). CF(0) has three main subunits: a, b and c.

Its subcellular location is the mitochondrion inner membrane. Functionally, mitochondrial membrane ATP synthase (F(1)F(0) ATP synthase or Complex V) produces ATP from ADP in the presence of a proton gradient across the membrane which is generated by electron transport complexes of the respiratory chain. F-type ATPases consist of two structural domains, F(1) - containing the extramembraneous catalytic core and F(0) - containing the membrane proton channel, linked together by a central stalk and a peripheral stalk. During catalysis, ATP synthesis in the catalytic domain of F(1) is coupled via a rotary mechanism of the central stalk subunits to proton translocation. Key component of the proton channel; it may play a direct role in the translocation of protons across the membrane. The protein is ATP synthase subunit a (ATP6) of Mycosarcoma maydis (Corn smut fungus).